The chain runs to 811 residues: G-type lectin S-receptor-like serine/threonine-protein kinase LECRK2 (811 aa).

An N-terminal signal peptide occupies residues 1–23; it reads MAPLLFLPILQLLLLYCTKSAQA. One can recognise a Bulb-type lectin domain in the interval 24–153; the sequence is QLNISIGSSL…DGATKWESFG (130 aa). The Extracellular segment spans residues 24 to 464; sequence QLNISIGSSL…DKKYWILGSS (441 aa). 7 N-linked (GlcNAc...) asparagine glycosylation sites follow: asparagine 26, asparagine 39, asparagine 59, asparagine 219, asparagine 226, asparagine 237, and asparagine 242. Residues 292-344 enclose the EGF-like; atypical domain; it reads PENICQTIQTKVGSGACGFNSYCTFDGTKNTTNCLCPQRYKFFDNERTYKGCR. 5 disulfide bridges follow: cysteine 296-cysteine 314, cysteine 308-cysteine 325, cysteine 327-cysteine 343, cysteine 389-cysteine 411, and cysteine 393-cysteine 399. Asparagine 321 carries an N-linked (GlcNAc...) asparagine glycan. In terms of domain architecture, PAN spans 352–436; it reads CDLDETAAMV…LQATVLLKVP (85 aa). A helical transmembrane segment spans residues 465-485; the sequence is LFFGSSVLVNFLLIFVLLFGT. At 486–811 the chain is on the cytoplasmic side; it reads YCSITSRKKT…DPSSYISSLA (326 aa). Residues 521 to 795 form the Protein kinase domain; the sequence is GGFHEVLGTG…KVMQMLDGAV (275 aa). Residues 527–535 and lysine 551 each bind ATP; that span reads LGTGASGIV. Aspartate 645 acts as the Proton acceptor in catalysis.

It belongs to the protein kinase superfamily. Ser/Thr protein kinase family.

Its subcellular location is the membrane. The catalysed reaction is L-seryl-[protein] + ATP = O-phospho-L-seryl-[protein] + ADP + H(+). The enzyme catalyses L-threonyl-[protein] + ATP = O-phospho-L-threonyl-[protein] + ADP + H(+). In terms of biological role, involved in resistance against the herbivorous insect brown planthopper (N.lugens, BPH). Member of the BPH3 (BPH resistance locus 3) cluster which contains LECRK1, LECRK2 and LECRK3. This Oryza sativa subsp. japonica (Rice) protein is G-type lectin S-receptor-like serine/threonine-protein kinase LECRK2.